The primary structure comprises 225 residues: Phosphoenolpyruvate guanylyltransferase (225 aa).

Phosphoenolpyruvate contacts are provided by threonine 150, glycine 166, and serine 169. Residues proline 167 to proline 186 are disordered.

This sequence belongs to the CofC family.

The enzyme catalyses phosphoenolpyruvate + GTP + H(+) = enolpyruvoyl-2-diphospho-5'-guanosine + diphosphate. It functions in the pathway cofactor biosynthesis; coenzyme F420 biosynthesis. Guanylyltransferase that catalyzes the activation of phosphoenolpyruvate (PEP) as enolpyruvoyl-2-diphospho-5'-guanosine, via the condensation of PEP with GTP. It is involved in the biosynthesis of coenzyme F420, a hydride carrier cofactor. The chain is Phosphoenolpyruvate guanylyltransferase from Rhodococcus erythropolis (strain PR4 / NBRC 100887).